The chain runs to 431 residues: Gamma-glutamyl phosphate reductase (431 aa).

The protein belongs to the gamma-glutamyl phosphate reductase family.

Its subcellular location is the cytoplasm. It catalyses the reaction L-glutamate 5-semialdehyde + phosphate + NADP(+) = L-glutamyl 5-phosphate + NADPH + H(+). Its pathway is amino-acid biosynthesis; L-proline biosynthesis; L-glutamate 5-semialdehyde from L-glutamate: step 2/2. Catalyzes the NADPH-dependent reduction of L-glutamate 5-phosphate into L-glutamate 5-semialdehyde and phosphate. The product spontaneously undergoes cyclization to form 1-pyrroline-5-carboxylate. The sequence is that of Gamma-glutamyl phosphate reductase from Methylobacterium sp. (strain 4-46).